The primary structure comprises 67 residues: Bowman-Birk type proteinase inhibitor A6 (67 aa).

6 disulfides stabilise this stretch: C9/C66, C10/C29, C13/C62, C16/C27, C36/C43, and C40/C54.

This sequence belongs to the Bowman-Birk serine protease inhibitor family. Expressed in bulb (at protein level).

In terms of biological role, serine protease inhibitor. Strongly inhibits trypsin (Ki = 4 nM) and elastase (Ki = 4.8 nM). Also inhibits chymotrypsin with a Ki of 22 nM. Does not inhibit bacterial subtilisin. In Hyacinthus orientalis (Common hyacinth), this protein is Bowman-Birk type proteinase inhibitor A6.